We begin with the raw amino-acid sequence, 412 residues long: [Pyruvate dehydrogenase (acetyl-transferring)] kinase isozyme 4, mitochondrial (412 aa).

Residues 138 to 368 form the Histidine kinase domain; that stretch reads ILEYKDTCTV…DAIIYLKALS (231 aa). Residues 254–261, Asp-293, 312–313, and 329–334 contribute to the ATP site; these read ELFKNAMR, ST, and GFGYGL.

Belongs to the PDK/BCKDK protein kinase family. As to quaternary structure, homodimer. Interacts with the pyruvate dehydrogenase complex subunit DLAT, and is part of the multimeric pyruvate dehydrogenase complex that contains multiple copies of pyruvate dehydrogenase (E1), dihydrolipoamide acetyltransferase (DLAT, E2) and lipoamide dehydrogenase (DLD, E3). In terms of tissue distribution, detected in skeletal muscle and heart.

Its subcellular location is the mitochondrion matrix. The enzyme catalyses L-seryl-[pyruvate dehydrogenase E1 alpha subunit] + ATP = O-phospho-L-seryl-[pyruvate dehydrogenase E1 alpha subunit] + ADP + H(+). In terms of biological role, kinase that plays a key role in regulation of glucose and fatty acid metabolism and homeostasis via phosphorylation of the pyruvate dehydrogenase subunits PDHA1 and PDHA2. This inhibits pyruvate dehydrogenase activity, and thereby regulates metabolite flux through the tricarboxylic acid cycle, down-regulates aerobic respiration and inhibits the formation of acetyl-coenzyme A from pyruvate. Inhibition of pyruvate dehydrogenase decreases glucose utilization and increases fat metabolism in response to prolonged fasting and starvation. Plays an important role in maintaining normal blood glucose levels under starvation, and is involved in the insulin signaling cascade. Via its regulation of pyruvate dehydrogenase activity, plays an important role in maintaining normal blood pH and in preventing the accumulation of ketone bodies under starvation. In the fed state, mediates cellular responses to glucose levels and to a high-fat diet. Regulates both fatty acid oxidation and de novo fatty acid biosynthesis. Plays a role in the generation of reactive oxygen species. Protects detached epithelial cells against anoikis. Plays a role in cell proliferation via its role in regulating carbohydrate and fatty acid metabolism. This chain is [Pyruvate dehydrogenase (acetyl-transferring)] kinase isozyme 4, mitochondrial (PDK4), found in Ictidomys tridecemlineatus (Thirteen-lined ground squirrel).